The primary structure comprises 113 residues: Ig heavy chain V-III region ABE-47N (113 aa).

The Ig-like domain maps to 1–113 (EVKLEESGGG…YWGQGTLVTV (113 aa)). A disulfide bridge connects residues Cys-22 and Cys-98.

The sequence is that of Ig heavy chain V-III region ABE-47N from Mus musculus (Mouse).